The primary structure comprises 167 residues: NADH-quinone oxidoreductase subunit B 2 (167 aa).

The [4Fe-4S] cluster site is built by cysteine 38, cysteine 39, cysteine 104, and cysteine 133.

It belongs to the complex I 20 kDa subunit family. As to quaternary structure, NDH-1 is composed of 14 different subunits. Subunits NuoB, C, D, E, F, and G constitute the peripheral sector of the complex. It depends on [4Fe-4S] cluster as a cofactor.

It localises to the cell membrane. It catalyses the reaction a quinone + NADH + 5 H(+)(in) = a quinol + NAD(+) + 4 H(+)(out). Functionally, NDH-1 shuttles electrons from NADH, via FMN and iron-sulfur (Fe-S) centers, to quinones in the respiratory chain. The immediate electron acceptor for the enzyme in this species is believed to be ubiquinone. Couples the redox reaction to proton translocation (for every two electrons transferred, four hydrogen ions are translocated across the cytoplasmic membrane), and thus conserves the redox energy in a proton gradient. This chain is NADH-quinone oxidoreductase subunit B 2, found in Roseiflexus sp. (strain RS-1).